Here is a 239-residue protein sequence, read N- to C-terminus: Uridylate kinase (239 aa).

13–16 contacts ATP; sequence KLSG. Glycine 55 contacts UMP. Residues glycine 56 and arginine 60 each contribute to the ATP site. Residues aspartate 75 and 136-143 each bind UMP; that span reads TGNPFFTT. ATP is bound by residues threonine 163, asparagine 164, tyrosine 169, and aspartate 172.

This sequence belongs to the UMP kinase family. In terms of assembly, homohexamer.

The protein resides in the cytoplasm. It catalyses the reaction UMP + ATP = UDP + ADP. The protein operates within pyrimidine metabolism; CTP biosynthesis via de novo pathway; UDP from UMP (UMPK route): step 1/1. Inhibited by UTP. Catalyzes the reversible phosphorylation of UMP to UDP. The chain is Uridylate kinase from Neisseria meningitidis serogroup A / serotype 4A (strain DSM 15465 / Z2491).